The sequence spans 84 residues: Large ribosomal subunit protein bL27 (84 aa).

Residues 1-22 (MAHKKAGGSTRNGRDSESKRLG) form a disordered region.

It belongs to the bacterial ribosomal protein bL27 family.

The protein is Large ribosomal subunit protein bL27 of Shewanella pealeana (strain ATCC 700345 / ANG-SQ1).